Consider the following 457-residue polypeptide: Protein translocase subunit SecY (457 aa).

10 consecutive transmembrane segments (helical) span residues 17-37 (IFFT…PVPG), 75-95 (IALG…LVVF), 120-140 (LFTL…ALRM), 163-183 (VFYL…MWIG), 195-215 (ISLI…GSIF), 230-250 (IVSL…TVLI), 287-307 (VIPV…GQFL), 326-346 (VVYS…WTAT), 386-406 (LLGA…GRIL), and 412-432 (VSYF…LDTM).

This sequence belongs to the SecY/SEC61-alpha family. As to quaternary structure, component of the Sec protein translocase complex. Heterotrimer consisting of SecY, SecE and SecG subunits. The heterotrimers can form oligomers, although 1 heterotrimer is thought to be able to translocate proteins. Interacts with the ribosome. Interacts with SecDF, and other proteins may be involved. Interacts with SecA.

It is found in the cell inner membrane. Its function is as follows. The central subunit of the protein translocation channel SecYEG. Consists of two halves formed by TMs 1-5 and 6-10. These two domains form a lateral gate at the front which open onto the bilayer between TMs 2 and 7, and are clamped together by SecE at the back. The channel is closed by both a pore ring composed of hydrophobic SecY resides and a short helix (helix 2A) on the extracellular side of the membrane which forms a plug. The plug probably moves laterally to allow the channel to open. The ring and the pore may move independently. This Chlamydia muridarum (strain MoPn / Nigg) protein is Protein translocase subunit SecY.